We begin with the raw amino-acid sequence, 121 residues long: Cytochrome B5-like protein (121 aa).

The helical transmembrane segment at 1-21 (MIAVIGLLLGFLVSALFLIQG) threads the bilayer. A disordered region spans residues 24–49 (RRTNDNQEKKRSSSEPVEDVVRPKSY). Positions 26-36 (TNDNQEKKRSS) are enriched in basic and acidic residues. Residues 46–121 (PKSYSKSEVA…IEDFYIGELH (76 aa)) enclose the Cytochrome b5 heme-binding domain. Heme is bound by residues His-81 and His-104.

This sequence belongs to the cytochrome b5 family.

It localises to the membrane. This chain is Cytochrome B5-like protein, found in Arabidopsis thaliana (Mouse-ear cress).